The primary structure comprises 496 residues: Glycerol kinase (496 aa).

Thr11 contributes to the ADP binding site. ATP is bound by residues Thr11, Thr12, and Ser13. Residue Thr11 coordinates sn-glycerol 3-phosphate. Arg15 serves as a coordination point for ADP. Residues Arg81, Glu82, Tyr133, and Asp242 each contribute to the sn-glycerol 3-phosphate site. Positions 81, 82, 133, 242, and 243 each coordinate glycerol. ADP contacts are provided by Thr264 and Gly307. ATP is bound by residues Thr264, Gly307, Gln311, and Gly408. ADP contacts are provided by Gly408 and Asn412.

The protein belongs to the FGGY kinase family.

It carries out the reaction glycerol + ATP = sn-glycerol 3-phosphate + ADP + H(+). It functions in the pathway polyol metabolism; glycerol degradation via glycerol kinase pathway; sn-glycerol 3-phosphate from glycerol: step 1/1. Its activity is regulated as follows. Inhibited by fructose 1,6-bisphosphate (FBP). Key enzyme in the regulation of glycerol uptake and metabolism. Catalyzes the phosphorylation of glycerol to yield sn-glycerol 3-phosphate. The protein is Glycerol kinase of Aromatoleum aromaticum (strain DSM 19018 / LMG 30748 / EbN1) (Azoarcus sp. (strain EbN1)).